Consider the following 400-residue polypeptide: CCA-adding enzyme (400 aa).

The ATP site is built by Gly28 and Arg31. Positions 28 and 31 each coordinate CTP. Mg(2+) is bound by residues Asp41 and Asp43. Positions 112, 155, 158, 161, and 164 each coordinate ATP. Residues Arg112, Asp155, Arg158, Arg161, and Arg164 each contribute to the CTP site.

The protein belongs to the tRNA nucleotidyltransferase/poly(A) polymerase family. Bacterial CCA-adding enzyme type 3 subfamily. As to quaternary structure, homodimer. It depends on Mg(2+) as a cofactor.

It catalyses the reaction a tRNA precursor + 2 CTP + ATP = a tRNA with a 3' CCA end + 3 diphosphate. The catalysed reaction is a tRNA with a 3' CCA end + 2 CTP + ATP = a tRNA with a 3' CCACCA end + 3 diphosphate. Its function is as follows. Catalyzes the addition and repair of the essential 3'-terminal CCA sequence in tRNAs without using a nucleic acid template. Adds these three nucleotides in the order of C, C, and A to the tRNA nucleotide-73, using CTP and ATP as substrates and producing inorganic pyrophosphate. tRNA 3'-terminal CCA addition is required both for tRNA processing and repair. Also involved in tRNA surveillance by mediating tandem CCA addition to generate a CCACCA at the 3' terminus of unstable tRNAs. While stable tRNAs receive only 3'-terminal CCA, unstable tRNAs are marked with CCACCA and rapidly degraded. This Staphylococcus haemolyticus (strain JCSC1435) protein is CCA-adding enzyme.